We begin with the raw amino-acid sequence, 618 residues long: UvrABC system protein C (618 aa).

The GIY-YIG domain occupies 19–97 (SEPGIYRMLD…IKALRPKYNV (79 aa)). Residues 208–243 (QIILDALAERMKQAVNQLNFEEAAVLRDQIKNLRLI) enclose the UVR domain.

It belongs to the UvrC family. As to quaternary structure, interacts with UvrB in an incision complex.

It is found in the cytoplasm. Its function is as follows. The UvrABC repair system catalyzes the recognition and processing of DNA lesions. UvrC both incises the 5' and 3' sides of the lesion. The N-terminal half is responsible for the 3' incision and the C-terminal half is responsible for the 5' incision. The sequence is that of UvrABC system protein C from Legionella pneumophila (strain Paris).